Reading from the N-terminus, the 427-residue chain is Piwi protein (427 aa).

A mid domain region spans residues 38–167 (PYEVPSLKYN…VQFVSKLGGK (130 aa)). In terms of domain architecture, Piwi spans 110 to 406 (GIMLVLPEYN…VAGIIANVNR (297 aa)). Residues 118–124 (YNTPLYY) form a binds 5'-phosphorylated end of guide DNA region. Residues 147–148 (RN) are binds target DNA. The binds guide DNA stretch occupies residues 150-155 (TFYVDN). Residues Gln159 and Leu427 each coordinate a divalent metal cation. A PIWI domain region spans residues 168-427 (PWILNVDPEK…RSLQTNPWFL (260 aa)).

The protein belongs to the argonaute family. Short pAgo subfamily. In terms of assembly, homodimer probably stabilized by DNA. Each subunit is capable of interacting with a DNA molecule. Requires a divalent metal cation as cofactor.

Might play a role in defense against invading genetic elements, using short nucleic acid sequences as guides to bind complementary target strands, resulting in slicing of the target nucleic acid. Binds nucleic acids with decreasing affinity in the following order; ssDNA, ssRNA, dsDNA, RNA-DNA, RNA-RNA. Association of the 5' seed region of the guide strand (nucleotides 2-7) with AfPiwi increases affinity for the corresponding target strand; the greatest increase in affinity is for guide DNA with target RNA. The polypeptide is Piwi protein (Archaeoglobus fulgidus (strain ATCC 49558 / DSM 4304 / JCM 9628 / NBRC 100126 / VC-16)).